A 50-amino-acid chain; its full sequence is Inter-alpha-trypsin inhibitor heavy chain H2 (50 aa).

The protein belongs to the ITIH family. In terms of assembly, I-alpha-I plasma protease inhibitors are assembled from one or two heavy chains (HC) and one light chain, bikunin. Inter-alpha-inhibitor (I-alpha-I) is composed of ITIH1/HC1, ITIH2/HC2 and bikunin. Phosphorylated by FAM20C in the extracellular medium.

The protein localises to the secreted. May act as a carrier of hyaluronan in serum or as a binding protein between hyaluronan and other matrix protein, including those on cell surfaces in tissues to regulate the localization, synthesis and degradation of hyaluronan which are essential to cells undergoing biological processes. This Bos taurus (Bovine) protein is Inter-alpha-trypsin inhibitor heavy chain H2 (ITIH2).